Consider the following 313-residue polypeptide: Cobalamin biosynthesis protein CobD (313 aa).

5 consecutive transmembrane segments (helical) span residues valine 52 to leucine 72, cysteine 79 to alanine 99, valine 154 to isoleucine 174, tyrosine 204 to serine 224, and alanine 289 to tyrosine 309.

This sequence belongs to the CobD/CbiB family.

It localises to the cell membrane. The protein operates within cofactor biosynthesis; adenosylcobalamin biosynthesis. Converts cobyric acid to cobinamide by the addition of aminopropanol on the F carboxylic group. The polypeptide is Cobalamin biosynthesis protein CobD (Mycobacterium bovis (strain ATCC BAA-935 / AF2122/97)).